The following is a 943-amino-acid chain: Leucine--tRNA ligase (943 aa).

Residues 40–51 (PYPSGAGLHVGH) carry the 'HIGH' region motif. Residues 717–721 (KMSKS) carry the 'KMSKS' region motif. Position 720 (Lys-720) interacts with ATP.

It belongs to the class-I aminoacyl-tRNA synthetase family.

The protein localises to the cytoplasm. It carries out the reaction tRNA(Leu) + L-leucine + ATP = L-leucyl-tRNA(Leu) + AMP + diphosphate. The sequence is that of Leucine--tRNA ligase from Bacteroides fragilis (strain YCH46).